An 82-amino-acid chain; its full sequence is UPF0180 protein BALH_1248 (82 aa).

It belongs to the UPF0180 family.

In Bacillus thuringiensis (strain Al Hakam), this protein is UPF0180 protein BALH_1248.